We begin with the raw amino-acid sequence, 642 residues long: Threonine--tRNA ligase (642 aa).

Positions 1-61 constitute a TGS domain; it reads MPVIRFYDGS…REDAFIEFVD (61 aa). The interval 243–534 is catalytic; that stretch reads DHRKIGKFLQ…LIEECSGNLP (292 aa). Residues Cys334, His385, and His511 each contribute to the Zn(2+) site.

The protein belongs to the class-II aminoacyl-tRNA synthetase family. In terms of assembly, homodimer. Requires Zn(2+) as cofactor.

The protein localises to the cytoplasm. The catalysed reaction is tRNA(Thr) + L-threonine + ATP = L-threonyl-tRNA(Thr) + AMP + diphosphate + H(+). Functionally, catalyzes the attachment of threonine to tRNA(Thr) in a two-step reaction: L-threonine is first activated by ATP to form Thr-AMP and then transferred to the acceptor end of tRNA(Thr). Also edits incorrectly charged L-seryl-tRNA(Thr). This chain is Threonine--tRNA ligase, found in Buchnera aphidicola subsp. Acyrthosiphon pisum (strain Tuc7).